The primary structure comprises 340 residues: UDP-3-O-acylglucosamine N-acyltransferase (340 aa).

Catalysis depends on His-247, which acts as the Proton acceptor.

The protein belongs to the transferase hexapeptide repeat family. LpxD subfamily. Homotrimer.

The catalysed reaction is a UDP-3-O-[(3R)-3-hydroxyacyl]-alpha-D-glucosamine + a (3R)-hydroxyacyl-[ACP] = a UDP-2-N,3-O-bis[(3R)-3-hydroxyacyl]-alpha-D-glucosamine + holo-[ACP] + H(+). The protein operates within bacterial outer membrane biogenesis; LPS lipid A biosynthesis. In terms of biological role, catalyzes the N-acylation of UDP-3-O-acylglucosamine using 3-hydroxyacyl-ACP as the acyl donor. Is involved in the biosynthesis of lipid A, a phosphorylated glycolipid that anchors the lipopolysaccharide to the outer membrane of the cell. The polypeptide is UDP-3-O-acylglucosamine N-acyltransferase (Caulobacter sp. (strain K31)).